A 379-amino-acid polypeptide reads, in one-letter code: MEQELRSIPASKLDQFIEVHLPDISFRDELREVIDVLCILLKNRCCRESSHPVRTSKVGKGGSSRKGTTLKGWSDADLVVFLDSFTCFGDQLNRRGEFTKEIKKLLFEVQRDRHIGVKIEVHSSWSPNHRALSFKLSAPDQQKEVKFDVLPAYDLLGHVCIPRKPNPQFYANLISERTSLGKEDEFSTCFTELQLYFLNWRPTKLKSLIRLVKHWYQLCKEKLGDPLPPQYALELLTIYAWERGGRLTKFNTAQGFRTVLELITKYKQLLIYWTVCYDFQHPEVSKYLRRQLKKPRPVILDPANPTGNIAGSNPKGWRRLAGEAAAWLRYPCFKYKDGFPVCPWDVPTEVDIPSQNYFFHIICLIFWLLLRLIFGKHSV.

At 1–355 the chain is on the cytoplasmic side; it reads MEQELRSIPA…VPTEVDIPSQ (355 aa). The helical; Anchor for type IV membrane protein transmembrane segment at 356–374 threads the bilayer; sequence NYFFHIICLIFWLLLRLIF. The Extracellular segment spans residues 375-379; the sequence is GKHSV.

This sequence belongs to the 2-5A synthase family. Interacts with OSBPL1A and ABCF3. As to expression, highly expressed in the brain, liver, spleen and heart.

Its subcellular location is the endoplasmic reticulum membrane. Does not have 2'-5'-OAS activity, but can bind double-stranded RNA. Displays antiviral activity against viruses via an alternative antiviral pathway independent of RNase L. This is Inactive 2'-5'-oligoadenylate synthase 1B (Oas1b) from Rattus norvegicus (Rat).